Consider the following 484-residue polypeptide: Cytochrome P450 monooxygenase poxD (484 aa).

The chain crosses the membrane as a helical span at residues 2 to 24 (VSPVVLATTAMIVVFLLAQRYLS). Cys-429 is a binding site for heme.

Belongs to the cytochrome P450 family. It depends on heme as a cofactor.

The protein resides in the membrane. It participates in secondary metabolite biosynthesis. Cytochrome P450 monooxygenase; part of the gene cluster that mediates the biosynthesis of oxaleimides, cytotoxic compounds containing an unusual disubstituted succinimide moiety. The first step of the pathway is provided by the HR-PKS poxF that serves in a new mode of collaborative biosynthesis with the PKS-NRPS poxE, by providing the olefin containing amino acid substrate via the synthesis of an ACP-bound dec-4-enoate. The cytochrome P450 monooxygenase poxM-catalyzed oxidation at the alpha-position creates the enzyme-bound 2-hydroxydec-4-enoyl-ACP thioester, which may be prone to spontaneous hydrolysis to yield 2-hydroxydec-4-enoic acid due to increased electrophilicity of the carbonyl. 2-hydroxydec-4-enoic acid can then be further oxidized by poxM to yield the alpha-ketoacid 2-oxodec-4-enoicacid, which is reductively aminated by the aminotransferase poxL to yield (S,E)-2-aminodec-4-enoic acid. The Hybrid PKS-NRPS synthetase poxE then performs condensation between the octaketide product of its PKS modules and the amino group of (S,E)-2-aminodec-4-enoic acid which is activated and incorporated by the adenylation domain. The resulting aminoacyl product can be cyclized by the Diels-Alderase PoxQ and reductively released by the reductive (R) domain of poxE to yield an aldehyde intermediate. The released aldehyde is then substrate for a Knoevenagel condensation by the hydrolyase poxO followed by an oxidation at the 5-position of the pyrrolidone ring. The presence of the olefin from the amino acid building block allows for migration of the substituted allyl group to occur. This allylic transposition reaction takes place in a conjugate addition, semipinacol-like fashion to yield a succinimide intermediate. Iterative two-electron oxidations of the C7 methyl of the succinimide intermediate to the carboxylic acid can be catalyzed by one of two remaining cytochrome P450 monooxygenasess poxC or poxD to yield oxaleimide A. Subsequent oxidation yields the maleimide scaffold oxaleimide I. Both oxaleimide A and oxaleimide I can undergo oxidative modifications in the decalin ring to yield the series of products oxaleimides B to H. The chain is Cytochrome P450 monooxygenase poxD from Penicillium oxalicum.